A 67-amino-acid polypeptide reads, in one-letter code: Beta-defensin 9 (67 aa).

A signal peptide spans 1–24; it reads MRTLCSLLLICCLLFSYTTPAANS. 3 cysteine pairs are disulfide-bonded: Cys34–Cys62, Cys41–Cys55, and Cys45–Cys63.

It belongs to the beta-defensin family. In terms of tissue distribution, weakly expressed in adult and neonatal brain.

The protein resides in the secreted. Its function is as follows. Has antibacterial activity. This Mus musculus (Mouse) protein is Beta-defensin 9 (Defb9).